Here is a 1197-residue protein sequence, read N- to C-terminus: Sensor protein EvgS (1197 aa).

Residues 1 to 21 (MKFLPYIFLLCCGLWSTISFA) form the signal peptide. The Cytoplasmic segment spans residues 22-325 (DEDYIEYRGI…SMTDENGSVR (304 aa)). Residues 326-346 (GVMGDILNIITLQTGLNFSPI) traverse the membrane as a helical segment. Residues 347–537 (TVSHNIHAGT…TWDLYSEQFY (191 aa)) are Periplasmic-facing. A helical transmembrane segment spans residues 538–558 (IVTTLSVLLVGSSLLWGFYLL). Over 559–1197 (RSVRRRKVIQ…EIAVFCQQNN (639 aa)) the chain is Cytoplasmic. The 221-residue stretch at 718–938 (TMSHEIRTPI…TFTITIPVEI (221 aa)) folds into the Histidine kinase domain. H721 carries the phosphohistidine; by autocatalysis modification. Residues 960–1074 (SILIADDHPT…VLKTHLSQLH (115 aa)) enclose the Response regulatory domain. At D1009 the chain carries 4-aspartylphosphate. An HPt domain is found at 1098–1197 (DLQLMQEILM…EIAVFCQQNN (100 aa)). H1137 bears the Phosphohistidine mark.

Post-translationally, activation requires a sequential transfer of a phosphate group from a His in the primary transmitter domain, to an Asp in the receiver domain and to a His in the secondary transmitter domain.

The protein resides in the cell inner membrane. It catalyses the reaction ATP + protein L-histidine = ADP + protein N-phospho-L-histidine.. Member of the two-component regulatory system EvgS/EvgA. Phosphorylates EvgA via a four-step phosphorelay in response to environmental signals. The sequence is that of Sensor protein EvgS (evgS) from Escherichia coli O157:H7.